Here is a 447-residue protein sequence, read N- to C-terminus: Signal recognition particle 54 kDa protein (447 aa).

GTP is bound by residues 103-110, 185-189, and 245-248; these read GVQGSGKT, DTAGR, and TKMD.

The protein belongs to the GTP-binding SRP family. SRP54 subfamily. Part of the signal recognition particle protein translocation system, which is composed of SRP and FtsY. Archaeal SRP consists of a 7S RNA molecule of 300 nucleotides and two protein subunits: SRP54 and SRP19.

It is found in the cytoplasm. The enzyme catalyses GTP + H2O = GDP + phosphate + H(+). Its function is as follows. Involved in targeting and insertion of nascent membrane proteins into the cytoplasmic membrane. Binds to the hydrophobic signal sequence of the ribosome-nascent chain (RNC) as it emerges from the ribosomes. The SRP-RNC complex is then targeted to the cytoplasmic membrane where it interacts with the SRP receptor FtsY. This chain is Signal recognition particle 54 kDa protein, found in Saccharolobus islandicus (strain Y.G.57.14 / Yellowstone #1) (Sulfolobus islandicus).